Reading from the N-terminus, the 214-residue chain is Calcineurin B-like protein 8 (214 aa).

EF-hand domains follow at residues Glu35–Ser70, Met71–Tyr106, Pro108–Glu143, and Ser152–Ile187. Ca(2+) is bound by residues Asp165, Asn167, Asp169, Lys171, and Glu176. Ser205 is subject to Phosphoserine.

This sequence belongs to the calcineurin regulatory subunit family. As to quaternary structure, interacts with CIPK23. Interacts with CIPK14 at the cell membrane exclusively.

Its subcellular location is the cytoplasm. It is found in the nucleus. It localises to the cell membrane. In terms of biological role, acts as a calcium sensor. CBL proteins interact with CIPK serine-threonine protein kinases. Binding of a CBL protein to the regulatory NAF domain of a CIPK protein lead to the activation of the kinase in a calcium-dependent manner. This chain is Calcineurin B-like protein 8 (CBL8), found in Arabidopsis thaliana (Mouse-ear cress).